The chain runs to 59 residues: MKAFYGILIIFILISMLDLSQQVFINAKCRGSPECLPKCKEAIGKAAGKCMNGKCKCYP.

The signal sequence occupies residues 1-22; it reads MKAFYGILIIFILISMLDLSQQ. Intrachain disulfides connect C29–C50, C35–C55, and C39–C57. The tract at residues 48 to 55 is interaction with Ca(2+)-activated K(+) channels; the sequence is GKCMNGKC.

Belongs to the short scorpion toxin superfamily. Potassium channel inhibitor family. Alpha-KTx 04 subfamily. Expressed by the venom gland.

The protein localises to the secreted. Its function is as follows. Potently blocks Kv1.1/KCNA1 (85%), Kv1.2/KCNA2 (91%), Kv1.3/KCNA3 (89%), Kv1.6/KCNA6 (94%), and Shaker (97%). In Tityus stigmurus (Brazilian scorpion), this protein is Potassium channel toxin alpha-KTx 4.7.